We begin with the raw amino-acid sequence, 191 residues long: ATP-dependent Clp protease proteolytic subunit 1 (191 aa).

Catalysis depends on serine 91, which acts as the Nucleophile. Histidine 116 is a catalytic residue.

This sequence belongs to the peptidase S14 family. As to quaternary structure, fourteen ClpP subunits assemble into 2 heptameric rings which stack back to back to give a disk-like structure with a central cavity, resembling the structure of eukaryotic proteasomes.

It localises to the cytoplasm. It carries out the reaction Hydrolysis of proteins to small peptides in the presence of ATP and magnesium. alpha-casein is the usual test substrate. In the absence of ATP, only oligopeptides shorter than five residues are hydrolyzed (such as succinyl-Leu-Tyr-|-NHMec, and Leu-Tyr-Leu-|-Tyr-Trp, in which cleavage of the -Tyr-|-Leu- and -Tyr-|-Trp bonds also occurs).. In terms of biological role, cleaves peptides in various proteins in a process that requires ATP hydrolysis. Has a chymotrypsin-like activity. Plays a major role in the degradation of misfolded proteins. This Chlamydia caviae (strain ATCC VR-813 / DSM 19441 / 03DC25 / GPIC) (Chlamydophila caviae) protein is ATP-dependent Clp protease proteolytic subunit 1.